Consider the following 228-residue polypeptide: RNA pyrophosphohydrolase (228 aa).

The unknown stretch occupies residues 1–70; the sequence is MEKRSGIGRL…KQWVKMMNDI (70 aa). The tract at residues 71-228 is rppH domain; that stretch reads VIDKRGFRLG…VLTEFAEFIR (158 aa). Residues 76 to 221 form the Nudix hydrolase domain; the sequence is GFRLGVGMVI…KRDVYQKVLT (146 aa). A Nudix box motif is present at residues 109 to 130; sequence GGLLPNETLREALNRELDEEVG.

The protein in the C-terminal section; belongs to the Nudix hydrolase family. RppH subfamily. It depends on a divalent metal cation as a cofactor.

Functionally, accelerates the degradation of transcripts by removing pyrophosphate from the 5'-end of triphosphorylated RNA, leading to a more labile monophosphorylated state that can stimulate subsequent ribonuclease cleavage. This is RNA pyrophosphohydrolase from Coxiella burnetii (strain RSA 493 / Nine Mile phase I).